Reading from the N-terminus, the 178-residue chain is Large ribosomal subunit protein eL20y (178 aa).

The protein belongs to the eukaryotic ribosomal protein eL20 family.

This Arabidopsis thaliana (Mouse-ear cress) protein is Large ribosomal subunit protein eL20y (RPL18AB).